A 677-amino-acid chain; its full sequence is Protein asunder (677 aa).

The stretch at 515–540 forms a coiled coil; it reads RLKLSKAKDQYRLLYRELEQLIQLNS. The segment covering 578–598 has biased composition (low complexity); it reads ESPLSPERLEPTSSSSSNSLL. The disordered stretch occupies residues 578–604; that stretch reads ESPLSPERLEPTSSSSSNSLLKARKRR. Positions 598–604 match the Nuclear localization signal (NLS) motif; it reads LKARKRR.

This sequence belongs to the Integrator subunit 13 family. In terms of assembly, belongs to the multiprotein complex Integrator, at least composed of IntS1, IntS2, IntS3, IntS4, omd/IntS5, IntS6, defl/IntS7, IntS8, IntS9, IntS10, IntS11, IntS12, asun/IntS13, IntS14 and IntS15. The core complex associates with protein phosphatase 2A subunits mts/PP2A and Pp2A-29B, to form the Integrator-PP2A (INTAC) complex. In terms of processing, phosphorylated.

It localises to the nucleus. The protein localises to the cytoplasm. It is found in the perinuclear region. Component of the integrator complex, a multiprotein complex that terminates RNA polymerase II (Pol II) transcription in the promoter-proximal region of genes. The integrator complex provides a quality checkpoint during transcription elongation by driving premature transcription termination of transcripts that are unfavorably configured for transcriptional elongation: the complex terminates transcription by (1) catalyzing dephosphorylation of the C-terminal domain (CTD) of Pol II subunit Polr2A/Rbp1 and Spt5, and (2) degrading the exiting nascent RNA transcript via endonuclease activity. The integrator complex is also involved in the 3'-end processing of the U7 snRNA, and also the spliceosomal snRNAs U1, U2, U4 and U5. The sequence is that of Protein asunder (asun) from Drosophila willistoni (Fruit fly).